Reading from the N-terminus, the 472-residue chain is Zinc finger and BTB domain-containing protein 18.2 (472 aa).

Positions 24–91 (CDCTVLVGEA…MYEGKLEFSN (68 aa)) constitute a BTB domain. The span at 127-149 (KIIDDGEKDDKPVDSEEHHEHSF) shows a compositional bias: basic and acidic residues. Disordered stretches follow at residues 127–155 (KIID…SQQK), 197–236 (AGKT…FKPM), and 269–334 (DLLS…LSTS). Low complexity predominate over residues 205–215 (SSPSSPLSQRS). The span at 279–288 (AKSPKSQQVG) shows a compositional bias: polar residues. Residues 309–319 (HTREDDLYQDR) show a composition bias toward basic and acidic residues. 4 consecutive C2H2-type zinc fingers follow at residues 344–366 (CICP…LSSH), 384–406 (PTCT…ERTH), 412–434 (FTCG…AVVH), and 440–463 (HACK…RKFH).

The protein belongs to the krueppel C2H2-type zinc-finger protein family. ZBTB18 subfamily.

The protein resides in the nucleus. Its function is as follows. Transcriptional repressor that plays a role in various developmental processes. Specifically binds the consensus DNA sequence 5'-[AC]ACATCTG[GT][AC]-3' which contains the E box core, and acts by recruiting chromatin remodeling multiprotein complexes. The protein is Zinc finger and BTB domain-containing protein 18.2 (zbtb18.2) of Xenopus laevis (African clawed frog).